A 198-amino-acid chain; its full sequence is Protein UNCMA_24250 (198 aa).

In terms of domain architecture, AMMECR1 spans 5–194 (EDGTLAVKTA…ETEPGGPVIE (190 aa)).

The polypeptide is Protein UNCMA_24250 (Methanocella arvoryzae (strain DSM 22066 / NBRC 105507 / MRE50)).